We begin with the raw amino-acid sequence, 291 residues long: Pyridoxal 5'-phosphate synthase subunit PdxS (291 aa).

Asp-23 contacts D-ribose 5-phosphate. Residue Lys-80 is the Schiff-base intermediate with D-ribose 5-phosphate of the active site. Gly-152 is a binding site for D-ribose 5-phosphate. Residue Arg-164 participates in D-glyceraldehyde 3-phosphate binding. D-ribose 5-phosphate is bound by residues Gly-213 and 234–235 (GS).

The protein belongs to the PdxS/SNZ family. As to quaternary structure, in the presence of PdxT, forms a dodecamer of heterodimers.

It carries out the reaction aldehydo-D-ribose 5-phosphate + D-glyceraldehyde 3-phosphate + L-glutamine = pyridoxal 5'-phosphate + L-glutamate + phosphate + 3 H2O + H(+). The protein operates within cofactor biosynthesis; pyridoxal 5'-phosphate biosynthesis. In terms of biological role, catalyzes the formation of pyridoxal 5'-phosphate from ribose 5-phosphate (RBP), glyceraldehyde 3-phosphate (G3P) and ammonia. The ammonia is provided by the PdxT subunit. Can also use ribulose 5-phosphate and dihydroxyacetone phosphate as substrates, resulting from enzyme-catalyzed isomerization of RBP and G3P, respectively. The polypeptide is Pyridoxal 5'-phosphate synthase subunit PdxS (Bifidobacterium adolescentis (strain ATCC 15703 / DSM 20083 / NCTC 11814 / E194a)).